Here is a 486-residue protein sequence, read N- to C-terminus: MNDQSMTIRGKDRYKSGVMAYKKMGYWEPDYVPKDTDVIALFRVTPQDGVDPIEAAAAVAGESSTATWTVVWTDRLTAAEKYRAKCYRVDPVPNSPGQYFAYIAYDLDLFEPGSISNLTASIIGNVFGFKPLKGLRLEDMRLPVAYVKTFQGPATGIVVERERLDKFGRPLLGATVKPKLGLSGRNYGRVVYEALKGGLDFTKDDENINSQPFMHWRERFLYCMEAVNRAQAASGEVKGTYLNVTAATMEDMYERAEFAKELGSCIVMIDLVIGYTAIQSMAKWARKNDMILHLHRAGHSTYTRQKNHGVSFRVIAKWMRLAGVDHIHAGTVVGKLEGDPNTTRGYYDICREEFNPTKLEHGIFFDQNWASLNKMMPVASGGIHAGQMHQLLDLLGEDVVLQFGGGTIGHPMGIQAGAIANRVALEAMILARNEGRDYVAEGPEILAKAAATCTPLKSALEVWKDVTFNYESTDAPDFVPTAIAAV.

Substrate-binding residues include N125 and T175. The Proton acceptor role is filled by K177. Position 179 (K179) interacts with substrate. 3 residues coordinate Mg(2+): K203, D205, and E206. K203 is subject to N6-carboxylysine. H295 serves as the catalytic Proton acceptor. Substrate-binding residues include R296, H328, and S380.

It belongs to the RuBisCO large chain family. Type I subfamily. In terms of assembly, heterohexadecamer of 8 large chains and 8 small chains. It depends on Mg(2+) as a cofactor.

It catalyses the reaction 2 (2R)-3-phosphoglycerate + 2 H(+) = D-ribulose 1,5-bisphosphate + CO2 + H2O. It carries out the reaction D-ribulose 1,5-bisphosphate + O2 = 2-phosphoglycolate + (2R)-3-phosphoglycerate + 2 H(+). Functionally, ruBisCO catalyzes two reactions: the carboxylation of D-ribulose 1,5-bisphosphate, the primary event in carbon dioxide fixation, as well as the oxidative fragmentation of the pentose substrate. Both reactions occur simultaneously and in competition at the same active site. This Afipia carboxidovorans (strain ATCC 49405 / DSM 1227 / KCTC 32145 / OM5) (Oligotropha carboxidovorans) protein is Ribulose bisphosphate carboxylase large chain.